The chain runs to 773 residues: Carnitine O-palmitoyltransferase 1, liver isoform (773 aa).

An N-acetylalanine modification is found at Ala2. Residues 2 to 47 (AEAHQAVAFQFTVTPDGIDLRLSHEALKQICLSGLHSWKKKFIRFK) are Cytoplasmic-facing. A helical membrane pass occupies residues 48–73 (NGIITGVFPANPSSWLIVVVGVISSM). The Mitochondrial intermembrane portion of the chain corresponds to 74-102 (HAKVDPSLGMIAKISRTLDTTGRMSSQTK). A helical transmembrane segment spans residues 103-122 (NIVSGVLFGTGLWVAVIMTM). Residues 123–773 (RYSLKVLLSY…LFGLTINSKK (651 aa)) lie on the Cytoplasmic side of the membrane. The residue at position 282 (Tyr282) is a 3'-nitrotyrosine. The Proton acceptor role is filled by His473. Position 555–567 (555–567 (GKGLIKKCRTSPD)) interacts with CoA. Thr588 is subject to Phosphothreonine. Residue Tyr589 is modified to 3'-nitrotyrosine. The (R)-carnitine site is built by Tyr589 and Thr602. A Phosphothreonine modification is found at Thr604. Phosphoserine occurs at positions 741 and 747.

The protein belongs to the carnitine/choline acetyltransferase family. Homohexamer and homotrimer. Identified in a complex that contains at least CPT1A, ACSL1 and VDAC1. Also identified in complexes with ACSL1 and VDAC2 and VDAC3. Interacts with ZDHHC4. As to expression, liver and kidney.

The protein resides in the mitochondrion outer membrane. The catalysed reaction is (R)-carnitine + hexadecanoyl-CoA = O-hexadecanoyl-(R)-carnitine + CoA. The enzyme catalyses succinyl-CoA + L-lysyl-[protein] = N(6)-succinyl-L-lysyl-[protein] + CoA + H(+). It functions in the pathway lipid metabolism; fatty acid beta-oxidation. Inhibited by malonyl-CoA. Catalyzes the transfer of the acyl group of long-chain fatty acid-CoA conjugates onto carnitine, an essential step for the mitochondrial uptake of long-chain fatty acids and their subsequent beta-oxidation in the mitochondrion. Also possesses a lysine succinyltransferase activity that can regulate enzymatic activity of substrate proteins such as ENO1 and metabolism independent of its classical carnitine O-palmitoyltransferase activity. Plays an important role in hepatic triglyceride metabolism. Also plays a role in inducible regulatory T-cell (iTreg) differentiation once activated by butyryl-CoA that antagonizes malonyl-CoA-mediated CPT1A repression. Sustains the IFN-I response by recruiting ZDHCC4 to palmitoylate MAVS at the mitochondria leading to MAVS stabilization and activation. This chain is Carnitine O-palmitoyltransferase 1, liver isoform (Cpt1a), found in Rattus norvegicus (Rat).